The following is a 425-amino-acid chain: Serine--tRNA ligase (425 aa).

231 to 233 (TAE) lines the L-serine pocket. 262-264 (RSE) is a binding site for ATP. Position 285 (Glu285) interacts with L-serine. 349-352 (EISS) lines the ATP pocket. Residue Ser385 participates in L-serine binding.

The protein belongs to the class-II aminoacyl-tRNA synthetase family. Type-1 seryl-tRNA synthetase subfamily. As to quaternary structure, homodimer. The tRNA molecule binds across the dimer.

The protein resides in the cytoplasm. The catalysed reaction is tRNA(Ser) + L-serine + ATP = L-seryl-tRNA(Ser) + AMP + diphosphate + H(+). It carries out the reaction tRNA(Sec) + L-serine + ATP = L-seryl-tRNA(Sec) + AMP + diphosphate + H(+). It functions in the pathway aminoacyl-tRNA biosynthesis; selenocysteinyl-tRNA(Sec) biosynthesis; L-seryl-tRNA(Sec) from L-serine and tRNA(Sec): step 1/1. Its function is as follows. Catalyzes the attachment of serine to tRNA(Ser). Is also able to aminoacylate tRNA(Sec) with serine, to form the misacylated tRNA L-seryl-tRNA(Sec), which will be further converted into selenocysteinyl-tRNA(Sec). This chain is Serine--tRNA ligase, found in Bacillus subtilis (strain 168).